A 913-amino-acid chain; its full sequence is Protein SEY1 homolog (913 aa).

Residues 1-825 lie on the Cytoplasmic side of the membrane; it reads MANASKTQII…ETGGQMSLKN (825 aa). Positions 33–288 constitute a GB1/RHD3-type G domain; that stretch reads GFNYNVIAIL…IPADGFAQYC (256 aa). 43–50 contacts GTP; the sequence is GSQSSGKS. Disordered regions lie at residues 89–108 and 436–455; these read AGGS…GDKP and TEQD…AKKG. Coiled-coil stretches lie at residues 636–659 and 703–727; these read DDEN…MESL and IEII…VIIN. A helical membrane pass occupies residues 826 to 846; the sequence is VPFAFWVILLILGWNEILMFT. Topologically, residues 847-849 are lumenal; that stretch reads RLF. A helical membrane pass occupies residues 850 to 870; that stretch reads FRLNIILPMFMAFIIIVGSCL. At 871–913 the chain is on the cytoplasmic side; that stretch reads YTGNAQVLSYLNKIAFIVIKHSYNFYKHLQTVGNQPTKPEKVD.

Belongs to the TRAFAC class dynamin-like GTPase superfamily. GB1/RHD3 GTPase family. RHD3 subfamily.

Its subcellular location is the endoplasmic reticulum membrane. Probable GTP-binding protein involved in generating and maintaining the structure of the tubular endoplasmic reticulum network. This is Protein SEY1 homolog from Plasmodium chabaudi chabaudi.